Here is a 146-residue protein sequence, read N- to C-terminus: ATP synthase epsilon chain 2 (146 aa).

The protein belongs to the ATPase epsilon chain family. As to quaternary structure, F-type ATPases have 2 components, CF(1) - the catalytic core - and CF(0) - the membrane proton channel. CF(1) has five subunits: alpha(3), beta(3), gamma(1), delta(1), epsilon(1). CF(0) has three main subunits: a, b and c.

Its subcellular location is the cell inner membrane. Its function is as follows. Produces ATP from ADP in the presence of a proton gradient across the membrane. The polypeptide is ATP synthase epsilon chain 2 (Cereibacter sphaeroides (strain ATCC 17023 / DSM 158 / JCM 6121 / CCUG 31486 / LMG 2827 / NBRC 12203 / NCIMB 8253 / ATH 2.4.1.) (Rhodobacter sphaeroides)).